The primary structure comprises 145 residues: Nucleoside diphosphate kinase (145 aa).

Residues K11, F59, R87, T93, R104, and N114 each coordinate ATP. H117 serves as the catalytic Pros-phosphohistidine intermediate.

The protein belongs to the NDK family. Homotetramer. Mg(2+) is required as a cofactor.

It localises to the cytoplasm. It catalyses the reaction a 2'-deoxyribonucleoside 5'-diphosphate + ATP = a 2'-deoxyribonucleoside 5'-triphosphate + ADP. The catalysed reaction is a ribonucleoside 5'-diphosphate + ATP = a ribonucleoside 5'-triphosphate + ADP. In terms of biological role, major role in the synthesis of nucleoside triphosphates other than ATP. The ATP gamma phosphate is transferred to the NDP beta phosphate via a ping-pong mechanism, using a phosphorylated active-site intermediate. The protein is Nucleoside diphosphate kinase of Myxococcus xanthus.